Consider the following 177-residue polypeptide: Large ribosomal subunit protein uL6 (177 aa).

Belongs to the universal ribosomal protein uL6 family. Part of the 50S ribosomal subunit.

Its function is as follows. This protein binds to the 23S rRNA, and is important in its secondary structure. It is located near the subunit interface in the base of the L7/L12 stalk, and near the tRNA binding site of the peptidyltransferase center. The sequence is that of Large ribosomal subunit protein uL6 from Methanosarcina barkeri (strain Fusaro / DSM 804).